The sequence spans 430 residues: Putative glycylpeptide N-tetradecanoyltransferase 2 (430 aa).

Tetradecanoyl-CoA is bound by residues 47–50, 181–183, and 189–193; these read HKFW, LCV, and SKGLA. The Proton acceptor; via carboxylate role is filled by leucine 430.

Belongs to the NMT family.

The catalysed reaction is N-terminal glycyl-[protein] + tetradecanoyl-CoA = N-tetradecanoylglycyl-[protein] + CoA + H(+). Its function is as follows. May add a myristoyl group to the N-terminal glycine residue of certain cellular proteins. This Arabidopsis thaliana (Mouse-ear cress) protein is Putative glycylpeptide N-tetradecanoyltransferase 2 (NMT2).